Consider the following 217-residue polypeptide: UPF0319 protein VS_II0881 (217 aa).

Residues 1 to 21 (MKTIQSIALLSAIVAAPSVLA) form the signal peptide.

The protein belongs to the UPF0319 family.

The sequence is that of UPF0319 protein VS_II0881 from Vibrio atlanticus (strain LGP32) (Vibrio splendidus (strain Mel32)).